Consider the following 175-residue polypeptide: Interleukin-10 (175 aa).

An N-terminal signal peptide occupies residues 1–18 (MPSSALLYCLIFLAGVAA). Disulfide bonds link Cys-26–Cys-122 and Cys-76–Cys-128. N-linked (GlcNAc...) asparagine glycosylation is present at Asn-130.

Belongs to the IL-10 family. Homodimer. Interacts with IL10RA and IL10RB.

It is found in the secreted. In terms of biological role, major immune regulatory cytokine that acts on many cells of the immune system where it has profound anti-inflammatory functions, limiting excessive tissue disruption caused by inflammation. Mechanistically, IL10 binds to its heterotetrameric receptor comprising IL10RA and IL10RB leading to JAK1 and STAT2-mediated phosphorylation of STAT3. In turn, STAT3 translocates to the nucleus where it drives expression of anti-inflammatory mediators. Targets antigen-presenting cells (APCs) such as macrophages and monocytes and inhibits their release of pro-inflammatory cytokines including granulocyte-macrophage colony-stimulating factor /GM-CSF, granulocyte colony-stimulating factor/G-CSF, IL-1 alpha, IL-1 beta, IL-6, IL-8 and TNF-alpha. Also interferes with antigen presentation by reducing the expression of MHC-class II and co-stimulatory molecules, thereby inhibiting their ability to induce T cell activation. In addition, controls the inflammatory response of macrophages by reprogramming essential metabolic pathways including mTOR signaling. This chain is Interleukin-10 (IL10), found in Sus scrofa (Pig).